The following is a 365-amino-acid chain: GDSL lipase (365 aa).

A signal peptide spans 1-27 (MAVASRKLGALVLVAVLCLSLPTGCLS). The active-site Nucleophile is the serine 40. N-linked (GlcNAc...) asparagine glycosylation is found at asparagine 189 and asparagine 310. Residues aspartate 318 and histidine 321 each act as charge relay system in the active site.

It belongs to the 'GDSL' lipolytic enzyme family. As to expression, restricted to the pericarp during achene maturation. Expressed in the leaves of mature plants and seedlings, as well as in buds and flowers. Present in disk florets.

It localises to the secreted. The protein resides in the extracellular space. It carries out the reaction (Z,S)-pyrethrolone + (1R,3R)-chrysanthemoyl-CoA = pyrethrin I + CoA. It catalyses the reaction (Z,S)-pyrethrolone + (1R,3R)-pyrethroyl-CoA = pyrethrin II + CoA. The catalysed reaction is (Z,S)-jasmololone + (1R,3R)-chrysanthemoyl-CoA = jasmolin I + CoA. The enzyme catalyses (Z,S)-cinerolone + (1R,3R)-chrysanthemoyl-CoA = cinerin I + CoA. It carries out the reaction (Z,S)-jasmololone + (1R,3R)-pyrethroyl-CoA = jasmolin II + CoA. It catalyses the reaction (Z,S)-cinerolone + (1R,3R)-pyrethroyl-CoA = cinerin II + CoA. Its pathway is isoprenoid biosynthesis. Its function is as follows. Component of the monoterpenoid pyrethrins biosynthesis; pyrethrins are widely used plant-derived pesticide. Acyltransferase that catalyzes the esterification of terpene acids and lipid alcohol substrates into pyrethrins; mediates the transfer of a chrysanthemoyl moiety from the coenzyme A (CoA) thio-ester chrysanthemoyl CoA to pyrethrolone, and, to a lower extent, to jasmololone and cinerolone thus producing pyrethrins (e.g. pyrethrin type I). Can also use pyrethroyl CoA as substrate. Also has esterase activity, being able to cleave the ester bond of pyrethrin I, p-nitrophenyl butanoate and p-nitrophenyl octanoate to produce pyrethrolone and p-nitrophenol, respectively. This Tanacetum cinerariifolium (Dalmatian daisy) protein is GDSL lipase.